A 339-amino-acid chain; its full sequence is Ribosomal RNA small subunit methyltransferase H (339 aa).

Residues Gly36–Tyr38, Asp55, Phe82, Asp103, and Gln110 contribute to the S-adenosyl-L-methionine site. Residues Gly286–Pro319 form a disordered region.

It belongs to the methyltransferase superfamily. RsmH family.

The protein localises to the cytoplasm. The enzyme catalyses cytidine(1402) in 16S rRNA + S-adenosyl-L-methionine = N(4)-methylcytidine(1402) in 16S rRNA + S-adenosyl-L-homocysteine + H(+). Its function is as follows. Specifically methylates the N4 position of cytidine in position 1402 (C1402) of 16S rRNA. This Methylobacterium nodulans (strain LMG 21967 / CNCM I-2342 / ORS 2060) protein is Ribosomal RNA small subunit methyltransferase H.